Reading from the N-terminus, the 608-residue chain is Glutamine--fructose-6-phosphate aminotransferase [isomerizing] (608 aa).

The active-site Nucleophile; for GATase activity is cysteine 2. The region spanning 2–217 (CGIVGIVGHK…DGDWAVVGKT (216 aa)) is the Glutamine amidotransferase type-2 domain. SIS domains lie at 283–422 (TDID…ARGT) and 456–598 (LSRE…VDQP). Lysine 603 acts as the For Fru-6P isomerization activity in catalysis.

It localises to the cytoplasm. The enzyme catalyses D-fructose 6-phosphate + L-glutamine = D-glucosamine 6-phosphate + L-glutamate. In terms of biological role, involved in the production of the root hair deformation (HAD) factor specifically on medicago. This Rhizobium leguminosarum bv. viciae protein is Glutamine--fructose-6-phosphate aminotransferase [isomerizing] (nodM).